A 421-amino-acid chain; its full sequence is Mannose-1-phosphate guanylyltransferase regulatory subunit alpha (421 aa).

The tract at residues leucine 2–alanine 252 is substrate-binding domain. Glutamate 85 and glutamine 248 together coordinate GDP-alpha-D-mannose. The interval leucine 274–leucine 421 is hexapeptide repeat domain. A C-loop region spans residues threonine 357 to isoleucine 385.

This sequence belongs to the transferase hexapeptide repeat family. In terms of assembly, component of the GMPPA-GMPPB mannose-1-phosphate guanylyltransferase complex composed of 4 gmppa subunits and 8 gmppb subunits; the complex is organized into three layers, a central layer made up of 2 gmppa dimers sandwiched between two layers each made up of 2 gmppb dimers.

The protein resides in the cytoplasm. In terms of biological role, regulatory subunit of the GMPPA-GMPPB mannose-1-phosphate guanylyltransferase complex; reduces the catalytic activity of GMPPB when part of the complex. Mediates allosteric feedback inhibition of GMPPB catalytic activity upon binding GDP-alpha-D-mannose. Together with GMPPB regulates GDP-alpha-D-mannose levels. This is Mannose-1-phosphate guanylyltransferase regulatory subunit alpha (gmppa) from Xenopus tropicalis (Western clawed frog).